The primary structure comprises 369 residues: Anhydro-N-acetylmuramic acid kinase (369 aa).

12–19 (GTSMDGVD) lines the ATP pocket.

The protein belongs to the anhydro-N-acetylmuramic acid kinase family.

It carries out the reaction 1,6-anhydro-N-acetyl-beta-muramate + ATP + H2O = N-acetyl-D-muramate 6-phosphate + ADP + H(+). It functions in the pathway amino-sugar metabolism; 1,6-anhydro-N-acetylmuramate degradation. The protein operates within cell wall biogenesis; peptidoglycan recycling. Catalyzes the specific phosphorylation of 1,6-anhydro-N-acetylmuramic acid (anhMurNAc) with the simultaneous cleavage of the 1,6-anhydro ring, generating MurNAc-6-P. Is required for the utilization of anhMurNAc either imported from the medium or derived from its own cell wall murein, and thus plays a role in cell wall recycling. The chain is Anhydro-N-acetylmuramic acid kinase from Shewanella baltica (strain OS185).